The primary structure comprises 753 residues: Subtilisin-like protease SBT3.17 (753 aa).

A signal peptide spans 1–29; that stretch reads MGNSFLIADTSSLVIGLLLILNGVFISAA. A propeptide spans 30–116 (activation peptide); it reads KHYGLNKIHI…VVPSRVMRLK (87 aa). The region spanning 38-115 is the Inhibitor I9 domain; it reads HIVHLGAKQH…RVVPSRVMRL (78 aa). Asparagine 97 carries an N-linked (GlcNAc...) asparagine glycan. The 484-residue stretch at 120–603 folds into the Peptidase S8 domain; the sequence is TFDYLGLLPT…GGLINPEKVT (484 aa). The active-site Charge relay system is aspartate 150. Asparagine 161 is a glycosylation site (N-linked (GlcNAc...) asparagine). Histidine 227 (charge relay system) is an active-site residue. Asparagine 369 carries an N-linked (GlcNAc...) asparagine glycan. Serine 534 functions as the Charge relay system in the catalytic mechanism. 3 N-linked (GlcNAc...) asparagine glycosylation sites follow: asparagine 639, asparagine 704, and asparagine 737.

The protein belongs to the peptidase S8 family.

It is found in the secreted. This is Subtilisin-like protease SBT3.17 from Arabidopsis thaliana (Mouse-ear cress).